Consider the following 499-residue polypeptide: Potassium voltage-gated channel subfamily A member 2 (499 aa).

Residues 1–26 (MTVATEDPADEAAALPGHPQDTYDPE) are disordered. The segment at 1–125 (MTVATEDPAD…YELGEEAMEM (125 aa)) is tetramerization domain. The Cytoplasmic segment spans residues 1–160 (MTVATEDPAD…LLFEYPESSG (160 aa)). Residues 161 to 182 (PARIIAIVSVMVILISIVSFCL) traverse the membrane as a helical segment. At 183 to 221 (ETLPIFRDENEDMHGSGMTFHTYSNSTAGYQQSTSFTDP) the chain is on the extracellular side. A glycan (N-linked (GlcNAc...) asparagine) is linked at Asn207. Residues 222–243 (FFIVETLCIIWFSFEFLVRFFA) traverse the membrane as a helical segment. Residue Cys244 is the site of S-palmitoyl cysteine attachment. Residues 244–254 (CPSKAGFFTNI) are Cytoplasmic-facing. A helical membrane pass occupies residues 255-275 (MNIIDIVAIIPYFITLGTELA). Topologically, residues 276 to 289 (EKPEDAQQGQQAMS) are extracellular. Residues 290-310 (LAILRVIRLVRVFRIFKLSRH) traverse the membrane as a helical; Voltage-sensor segment. Residues 311-325 (SKGLQILGQTLKASM) lie on the Cytoplasmic side of the membrane. The interval 312 to 325 (KGLQILGQTLKASM) is S4-S5 linker. The chain crosses the membrane as a helical span at residues 326 to 347 (RELGLLIFFLFIGVILFSSAVY). Residues 348–361 (FAEADERDSQFPSI) lie on the Extracellular side of the membrane. The segment at residues 362–373 (PDAFWWAVVSMT) is an intramembrane region (helical). A Selectivity filter motif is present at residues 374–379 (TVGYGD). The stretch at 374–381 (TVGYGDMV) is an intramembrane region. Residues 382–388 (PTTIGGK) are Extracellular-facing. A helical membrane pass occupies residues 389-417 (IVGSLCAIAGVLTIALPVPVIVSNFNYFY). At 418–499 (HRETEGEEQA…VNITKMLTDV (82 aa)) the chain is on the cytoplasmic side. Position 429 is a phosphotyrosine (Tyr429). Phosphoserine occurs at positions 434, 440, 441, and 449. Tyr458 carries the phosphotyrosine modification. Ser468 carries the phosphoserine modification. A PDZ-binding motif is present at residues 497 to 499 (TDV).

This sequence belongs to the potassium channel family. A (Shaker) (TC 1.A.1.2) subfamily. Kv1.2/KCNA2 sub-subfamily. In terms of assembly, homotetramer and heterotetramer with other channel-forming alpha subunits, such as KCNA1, KCNA4, KCNA5, KCNA6 and KCNA7. Channel activity is regulated by interaction with the beta subunits, including KCNAB1 and KCNAB2. Identified in a complex with KCNA1 and KCNAB2. Identified in a complex with KCNA4 and FYN. Identified in a complex with KCNA5 and KCNAB1. Interacts with the beta subunit KCNAB1. Interacts with PTK2B. Interacts (via C-terminus) with CTTN. Interacts (via N-terminal cytoplasmic domain) with RHOA (GTP-bound form); this regulates channel activity by reducing location at the cell surface in response to CHRM1 activation. Interacts with DRD2. Interacts with SIGMAR1; cocaine consumption leads to increased interaction. Interacts with ADAM22. Interacts with CNTNAP2. Interacts (via C-terminus) with the PDZ domains of DLG1, DLG2 and DLG4. Interacts with ADAM11. Interacts with LYNX1. Phosphorylated on tyrosine residues; phosphorylation increases in response to ischemia. Phosphorylated on tyrosine residues by activated PTK2B/PYK2. Phosphorylation on tyrosine residues suppresses ion channel activity. Phosphorylated on tyrosine residues in response to CHRM1 activation; this abolishes interaction with CTTN. This is probably due to endocytosis of the phosphorylated channel subunits. Phosphorylated on serine residues in response to increased cAMP levels; phosphorylation is apparently not catalyzed by PKA. Post-translationally, N-glycosylated, with complex, sialylated N-glycans. As to expression, detected in portal vein myocytes (at protein level). Detected in portal vein. Brain, liver and kidney.

The protein resides in the cell membrane. The protein localises to the membrane. It is found in the cell projection. Its subcellular location is the axon. It localises to the synapse. The protein resides in the presynaptic cell membrane. The protein localises to the synaptosome. It is found in the endoplasmic reticulum membrane. Its subcellular location is the dendrite. It localises to the lamellipodium membrane. The protein resides in the cell junction. The protein localises to the paranodal septate junction. It catalyses the reaction K(+)(in) = K(+)(out). With respect to regulation, inhibited by 4-aminopyridine (4-AP). Inhibited by dendrotoxin (DTX) and charybdotoxin (CTX), but not by tetraethylammonium (TEA). Inhibited by tityustoxin-K alpha (TsTX-Kalpha), a toxin that is highly specific for KCNA2. Inhibited by maurotoxin. Inhibited by kappaM conotoxins kappaM-RIIIJ and kappaM-RIIIK. Functionally, voltage-gated potassium channel that mediates transmembrane potassium transport in excitable membranes, primarily in the brain and the central nervous system, but also in the cardiovascular system. Prevents aberrant action potential firing and regulates neuronal output. Forms tetrameric potassium-selective channels through which potassium ions pass in accordance with their electrochemical gradient. The channel alternates between opened and closed conformations in response to the voltage difference across the membrane. Can form functional homotetrameric channels and heterotetrameric channels that contain variable proportions of KCNA1, KCNA2, KCNA4, KCNA5, KCNA6, KCNA7, and possibly other family members as well; channel properties depend on the type of alpha subunits that are part of the channel. Channel properties are modulated by cytoplasmic beta subunits that regulate the subcellular location of the alpha subunits and promote rapid inactivation of delayed rectifier potassium channels. In vivo, membranes probably contain a mixture of heteromeric potassium channel complexes, making it difficult to assign currents observed in intact tissues to any particular potassium channel family member. Homotetrameric KCNA2 forms a delayed-rectifier potassium channel that opens in response to membrane depolarization, followed by slow spontaneous channel closure. In contrast, a heteromultimer formed by KCNA2 and KCNA4 shows rapid inactivation. Regulates neuronal excitability and plays a role as pacemaker in the regulation of neuronal action potentials. KCNA2-containing channels play a presynaptic role and prevent hyperexcitability and aberrant action potential firing. Response to toxins that are selective for KCNA2-containing potassium channels suggests that in Purkinje cells, dendritic subthreshold KCNA2-containing potassium channels prevent random spontaneous calcium spikes, suppressing dendritic hyperexcitability without hindering the generation of somatic action potentials, and thereby play an important role in motor coordination. Plays a role in the induction of long-term potentiation of neuron excitability in the CA3 layer of the hippocampus. May function as down-stream effector for G protein-coupled receptors and inhibit GABAergic inputs to basolateral amygdala neurons. May contribute to the regulation of neurotransmitter release, such as gamma-aminobutyric acid (GABA). Contributes to the regulation of the axonal release of the neurotransmitter dopamine. Reduced KCNA2 expression plays a role in the perception of neuropathic pain after peripheral nerve injury, but not acute pain. Plays a role in the regulation of the time spent in non-rapid eye movement (NREM) sleep. The chain is Potassium voltage-gated channel subfamily A member 2 (KCNA2) from Oryctolagus cuniculus (Rabbit).